Consider the following 365-residue polypeptide: tRNA/tmRNA (uracil-C(5))-methyltransferase (365 aa).

S-adenosyl-L-methionine-binding residues include Gln189, Tyr217, Asn222, Glu238, and Asp298. Cys323 (nucleophile) is an active-site residue. Glu357 functions as the Proton acceptor in the catalytic mechanism.

Belongs to the class I-like SAM-binding methyltransferase superfamily. RNA M5U methyltransferase family. TrmA subfamily.

The enzyme catalyses uridine(54) in tRNA + S-adenosyl-L-methionine = 5-methyluridine(54) in tRNA + S-adenosyl-L-homocysteine + H(+). The catalysed reaction is uridine(341) in tmRNA + S-adenosyl-L-methionine = 5-methyluridine(341) in tmRNA + S-adenosyl-L-homocysteine + H(+). In terms of biological role, dual-specificity methyltransferase that catalyzes the formation of 5-methyluridine at position 54 (m5U54) in all tRNAs, and that of position 341 (m5U341) in tmRNA (transfer-mRNA). The polypeptide is tRNA/tmRNA (uracil-C(5))-methyltransferase (Shewanella sp. (strain W3-18-1)).